The chain runs to 185 residues: Adenine phosphoribosyltransferase (185 aa).

It belongs to the purine/pyrimidine phosphoribosyltransferase family. As to quaternary structure, homodimer.

It is found in the cytoplasm. The catalysed reaction is AMP + diphosphate = 5-phospho-alpha-D-ribose 1-diphosphate + adenine. It functions in the pathway purine metabolism; AMP biosynthesis via salvage pathway; AMP from adenine: step 1/1. Its function is as follows. Catalyzes a salvage reaction resulting in the formation of AMP, that is energically less costly than de novo synthesis. This chain is Adenine phosphoribosyltransferase, found in Shewanella denitrificans (strain OS217 / ATCC BAA-1090 / DSM 15013).